We begin with the raw amino-acid sequence, 463 residues long: L-seryl-tRNA(Sec) selenium transferase (463 aa).

Lys-295 is modified (N6-(pyridoxal phosphate)lysine).

This sequence belongs to the SelA family. Homodecamer; pentamer of dimers. Binds only one seryl-tRNA(Sec) per dimer. It depends on pyridoxal 5'-phosphate as a cofactor.

The protein localises to the cytoplasm. The catalysed reaction is L-seryl-tRNA(Sec) + selenophosphate + H(+) = L-selenocysteinyl-tRNA(Sec) + phosphate. The protein operates within aminoacyl-tRNA biosynthesis; selenocysteinyl-tRNA(Sec) biosynthesis; selenocysteinyl-tRNA(Sec) from L-seryl-tRNA(Sec) (bacterial route): step 1/1. Converts seryl-tRNA(Sec) to selenocysteinyl-tRNA(Sec) required for selenoprotein biosynthesis. In Shigella dysenteriae serotype 1 (strain Sd197), this protein is L-seryl-tRNA(Sec) selenium transferase.